The sequence spans 976 residues: MTESPTTTPGSTSGAPSGVPSGVNDAESDAPRHRYTAELAAGVERTWQQNWARLGTFNVPNPVGSLAPSDGSPVPEDKLFVQDMFPYPSGEGLHVGHPLGYIATDVFARYHRMKGRNVLHALGFDAFGLPAEQYAVQTGTHPRTRTEANVVNFRRQLGRLGLGHDSRRSFSTTDVEFYKWTQWIFLQIYNAWFDAAANKARPISELVAEFDSGARSLVDGRDWSTLSAGERADVIDDHRLVYRADSMVNWCPGLGTVLANEEVTSDGRSDRGNFPVFRKRLRQWMMRITAYSDRLLDDLDVLDWPDQVKTMQRNWIGRSTGASALFTATRSNGETVGLEVFTTRPDTLFGATYLVLAPEHDLVDDLVGAGWPAGVDPLWTGGGATPAEAVAAYRRAIAAKSDLERQESKEKTGVFLGSHAINPATGQPVPIFIADYVLAGYGTGAIMAVPGHDQRDWDFARALGLPVVEVIAGGDISQAAYTGDGVLVNSGFLDGMSVGEAKQAITARLESDGHGQARIEFKLRDWLFARQRYWGEPFPIVYDADGRPHALDESALPVELPDVPDYSPVLFDPDDANSEPSPPLGKATEWVHVELDLGDGLKPYSRDTNVMPQWAGSSWYELRYTDPHNADRFCAKENETYWMGPRPAEHGPDDPGGVDLYVGGAEHAVLHLLYARFWHKVLYDLGHVSSREPYRKLINQGYIQAFAYTDARGSYVPAEEVIERDGGFVYPGADGEIEVFQEFGKIGKSLKNSISPDEICDDYGADTLRVYEMSMGPIEASRPWATKDVIGAYRFLQRVWRLVIDENTGEILVADTPAELDTDTLRALHRAIAGVAEDYAALRNNTAVAKLIEYTNFLTKRHRDAVPRAAIEPLVLMVAPLAPHLAEELWQRLGHTTSLAHGPFPAADPAYLIDDTVEYPVQVNGKVRGRVVVAADADDDAVKAAALADEKVQAFLAGASPRKVIVVAGRLVNLVV.

Residues 1 to 23 are compositionally biased toward low complexity; that stretch reads MTESPTTTPGSTSGAPSGVPSGV. The disordered stretch occupies residues 1–34; that stretch reads MTESPTTTPGSTSGAPSGVPSGVNDAESDAPRHR. The 'HIGH' region motif lies at 86–97; the sequence is PYPSGEGLHVGH. Positions 745–749 match the 'KMSKS' region motif; sequence KIGKS. Lysine 748 serves as a coordination point for ATP.

This sequence belongs to the class-I aminoacyl-tRNA synthetase family.

The protein resides in the cytoplasm. It carries out the reaction tRNA(Leu) + L-leucine + ATP = L-leucyl-tRNA(Leu) + AMP + diphosphate. The sequence is that of Leucine--tRNA ligase from Mycobacterium marinum (strain ATCC BAA-535 / M).